Consider the following 384-residue polypeptide: Probable beta-1,3-galactosyltransferase 1 (384 aa).

Residues 21–43 (SVFFMCLASFCLGMFFTNRMWNI) form a helical; Signal-anchor for type II membrane protein membrane-spanning segment. 2 N-linked (GlcNAc...) asparagine glycosylation sites follow: N73 and N105.

This sequence belongs to the glycosyltransferase 31 family. The cofactor is Mn(2+).

It localises to the golgi apparatus membrane. Its pathway is protein modification; protein glycosylation. Beta-1,3-galactosyltransferase that transfers galactose from UDP-galactose to substrates with a terminal glycosyl residue. In Arabidopsis thaliana (Mouse-ear cress), this protein is Probable beta-1,3-galactosyltransferase 1 (B3GALT1).